We begin with the raw amino-acid sequence, 287 residues long: Cyclopropane mycolic acid synthase 3 (287 aa).

S-adenosyl-L-methionine-binding positions include 33–34 (YS), 68–76 (LLDIGCGWG), 94–99 (TLSENQ), and 123–124 (WE). Residue cysteine 269 is part of the active site.

Belongs to the CFA/CMAS family. Homodimer.

Its subcellular location is the cytoplasm. It catalyses the reaction a 1-acyl-2-(9Z)-enoyl-sn-glycero-3-phospholipid + S-adenosyl-L-methionine = a 1-acyl-2-(9-cyclopronane)-acyl-sn-glycero-3-phospholipid + S-adenosyl-L-homocysteine + H(+). It functions in the pathway lipid metabolism; mycolic acid biosynthesis. Functionally, involved in the phagosome maturation block (PMB). Catalyzes the conversion of a double bond to a cyclopropane ring at the proximal position of an alpha mycolic acid via the transfer of a methylene group from S-adenosyl-L-methionine. It can use cis, cis 11,14-eicosadienoic acid and linoelaidic acid as substrate. Cyclopropanated mycolic acids are key factors participating in cell envelope permeability, host immunomodulation and persistence. The sequence is that of Cyclopropane mycolic acid synthase 3 (pcaA) from Mycobacterium tuberculosis (strain CDC 1551 / Oshkosh).